Consider the following 762-residue polypeptide: FAST kinase domain-containing protein 5, mitochondrial (762 aa).

Residue serine 95 is modified to Phosphoserine. At lysine 506 the chain carries N6-acetyllysine. One can recognise an RAP domain in the interval 695 to 755 (LAIQFTNKNQ…RLEKLAYLHE (61 aa)).

This sequence belongs to the FAST kinase family. As to quaternary structure, found in a complex with GRSF1, DDX28, DHX30 and FASTKD2. Associates with the 12S mitochondrial rRNA (12S mt-rRNA). As to expression, expression detected in spleen, testis, colon, heart, smooth muscle, kidney, brain, lung, liver, brown and white adipose tissue.

The protein localises to the mitochondrion matrix. It localises to the mitochondrion nucleoid. In terms of biological role, plays an important role in the processing of non-canonical mitochondrial mRNA precursors. The polypeptide is FAST kinase domain-containing protein 5, mitochondrial (Fastkd5) (Mus musculus (Mouse)).